The following is a 429-amino-acid chain: Enolase (429 aa).

A (2R)-2-phosphoglycerate-binding site is contributed by Gln-163. Catalysis depends on Glu-205, which acts as the Proton donor. Mg(2+) is bound by residues Asp-242, Glu-287, and Asp-314. Residues Lys-339, Arg-368, Ser-369, and Lys-390 each contribute to the (2R)-2-phosphoglycerate site. The Proton acceptor role is filled by Lys-339.

This sequence belongs to the enolase family. Homooctamer. Mg(2+) is required as a cofactor.

It is found in the cytoplasm. Its subcellular location is the secreted. It localises to the cell surface. It catalyses the reaction (2R)-2-phosphoglycerate = phosphoenolpyruvate + H2O. Its pathway is carbohydrate degradation; glycolysis; pyruvate from D-glyceraldehyde 3-phosphate: step 4/5. Functionally, catalyzes the reversible conversion of 2-phosphoglycerate (2-PG) into phosphoenolpyruvate (PEP). It is essential for the degradation of carbohydrates via glycolysis. The protein is Enolase of Zymomonas mobilis subsp. mobilis (strain ATCC 31821 / ZM4 / CP4).